Here is a 575-residue protein sequence, read N- to C-terminus: Adenine deaminase 1 (575 aa).

It belongs to the metallo-dependent hydrolases superfamily. Adenine deaminase family. Mn(2+) is required as a cofactor.

The enzyme catalyses adenine + H2O + H(+) = hypoxanthine + NH4(+). The polypeptide is Adenine deaminase 1 (Agrobacterium fabrum (strain C58 / ATCC 33970) (Agrobacterium tumefaciens (strain C58))).